A 286-amino-acid chain; its full sequence is Probable alpha-ketoglutarate-dependent hypophosphite dioxygenase (286 aa).

Belongs to the PhyH family.

Functionally, required for hypophosphite oxidation. This Stutzerimonas stutzeri (Pseudomonas stutzeri) protein is Probable alpha-ketoglutarate-dependent hypophosphite dioxygenase (htxA).